We begin with the raw amino-acid sequence, 117 residues long: Type II secretion system protein I (117 aa).

Positions 1 to 6 (MKSKRG) are cleaved as a propeptide — leader sequence. Phe-7 carries the post-translational modification N-methylphenylalanine. The chain crosses the membrane as a helical span at residues 7–27 (FTLLEVLVALAIFATAAISVI).

It belongs to the GSP I family. In terms of assembly, type II secretion is composed of four main components: the outer membrane complex, the inner membrane complex, the cytoplasmic secretion ATPase and the periplasm-spanning pseudopilus. Interacts with core component EpsG. In terms of processing, cleaved by prepilin peptidase. Post-translationally, methylated by prepilin peptidase at the amino group of the N-terminal phenylalanine once the leader sequence is cleaved by prepilin peptidase.

It is found in the cell inner membrane. In terms of biological role, component of the type II secretion system required for the energy-dependent secretion of extracellular factors such as proteases and toxins from the periplasm. Part of the pseudopilus tip complex that is critical for the recognition and binding of secretion substrates. This is Type II secretion system protein I (epsI) from Vibrio cholerae serotype O1 (strain ATCC 39315 / El Tor Inaba N16961).